The primary structure comprises 349 residues: tRNA N6-adenosine threonylcarbamoyltransferase (349 aa).

Positions 114 and 118 each coordinate Fe cation. Residues 136–140 (IMSGG), Asp-169, Gly-182, and Asn-280 contribute to the substrate site. Asp-308 contributes to the Fe cation binding site.

The protein belongs to the KAE1 / TsaD family. Fe(2+) is required as a cofactor.

It localises to the cytoplasm. It carries out the reaction L-threonylcarbamoyladenylate + adenosine(37) in tRNA = N(6)-L-threonylcarbamoyladenosine(37) in tRNA + AMP + H(+). Its function is as follows. Required for the formation of a threonylcarbamoyl group on adenosine at position 37 (t(6)A37) in tRNAs that read codons beginning with adenine. Is involved in the transfer of the threonylcarbamoyl moiety of threonylcarbamoyl-AMP (TC-AMP) to the N6 group of A37, together with TsaE and TsaB. TsaD likely plays a direct catalytic role in this reaction. The protein is tRNA N6-adenosine threonylcarbamoyltransferase of Ehrlichia chaffeensis (strain ATCC CRL-10679 / Arkansas).